A 183-amino-acid polypeptide reads, in one-letter code: ADP-ribosylation factor-like protein 5 (183 aa).

GTP-binding positions include 27 to 34, 70 to 74, and 129 to 132; these read GLNAAGKT, DLGGQ, and NKQD.

This sequence belongs to the small GTPase superfamily. Arf family.

In terms of biological role, may bind and exchange GTP and GDP. The protein is ADP-ribosylation factor-like protein 5 (arl5) of Dictyostelium discoideum (Social amoeba).